Here is a 357-residue protein sequence, read N- to C-terminus: 3-isopropylmalate dehydrogenase (357 aa).

An NAD(+)-binding site is contributed by 76–89 (GPQWDTIDPALRPE). Substrate is bound by residues R96, R106, R134, and D224. 3 residues coordinate Mg(2+): D224, D248, and D252. 282–294 (GSAPDIAGQGVAN) is a binding site for NAD(+).

The protein belongs to the isocitrate and isopropylmalate dehydrogenases family. LeuB type 1 subfamily. Homodimer. Mg(2+) serves as cofactor. The cofactor is Mn(2+).

The protein localises to the cytoplasm. It carries out the reaction (2R,3S)-3-isopropylmalate + NAD(+) = 4-methyl-2-oxopentanoate + CO2 + NADH. The protein operates within amino-acid biosynthesis; L-leucine biosynthesis; L-leucine from 3-methyl-2-oxobutanoate: step 3/4. Functionally, catalyzes the oxidation of 3-carboxy-2-hydroxy-4-methylpentanoate (3-isopropylmalate) to 3-carboxy-4-methyl-2-oxopentanoate. The product decarboxylates to 4-methyl-2 oxopentanoate. The chain is 3-isopropylmalate dehydrogenase from Xylella fastidiosa (strain Temecula1 / ATCC 700964).